Consider the following 194-residue polypeptide: Outer-membrane lipoprotein LolB (194 aa).

The signal sequence occupies residues 1–18 (MKLLQHLTLIFCLLILTA). The N-palmitoyl cysteine moiety is linked to residue Cys19. Cys19 is lipidated: S-diacylglycerol cysteine.

It belongs to the LolB family. As to quaternary structure, monomer.

The protein localises to the cell outer membrane. Its function is as follows. Plays a critical role in the incorporation of lipoproteins in the outer membrane after they are released by the LolA protein. The protein is Outer-membrane lipoprotein LolB of Tolumonas auensis (strain DSM 9187 / NBRC 110442 / TA 4).